Here is a 249-residue protein sequence, read N- to C-terminus: Type I iodothyronine deiodinase (249 aa).

Residues 1 to 12 (MGLPRPGLWLKR) are Extracellular-facing. The chain crosses the membrane as a helical; Signal-anchor for type III membrane protein span at residues 13-33 (LWVLVQVAVEVAVGKVLMTLF). Residues 34 to 249 (PERVKQNILA…VRAVLEELHS (216 aa)) are Cytoplasmic-facing. Sec-126 is an active-site residue. Sec-126 is a non-standard amino acid (selenocysteine).

The protein belongs to the iodothyronine deiodinase family. Predominantly monomer. Can form homodimers but homodimerization is not essential for enzyme activity.

Its subcellular location is the cell membrane. It is found in the endoplasmic reticulum membrane. The protein resides in the basolateral cell membrane. The enzyme catalyses 3,3',5-triiodo-L-thyronine + iodide + A + H(+) = L-thyroxine + AH2. It catalyses the reaction 3,3',5'-triiodo-L-thyronine + iodide + A + H(+) = L-thyroxine + AH2. The catalysed reaction is 3,3'-diiodo-L-thyronine + iodide + A + H(+) = 3,3',5'-triiodo-L-thyronine + AH2. It carries out the reaction 3,3'-diiodo-L-thyronine + iodide + A + H(+) = 3,3',5-triiodo-L-thyronine + AH2. The enzyme catalyses 3'-iodo-L-thyronine + iodide + A + H(+) = 3',5'-diiodo-L-thyronine + AH2. It catalyses the reaction 3-iodo-L-thyronine + iodide + A + H(+) = 3,5-diiodo-L-thyronine + AH2. The catalysed reaction is 3-iodo-L-thyronine + iodide + A + H(+) = 3,3'-diiodo-L-thyronine + AH2. It carries out the reaction 3,3'-diiodothyronamine + iodide + A + H(+) = 3,3',5'-triiodothyronamine + AH2. The enzyme catalyses 3'-iodothyronamine + iodide + A + H(+) = 3',5'-diiodothyronamine + AH2. It catalyses the reaction 3-iodothyronamine + iodide + A + H(+) = 3,3'-diiodothyronamine + AH2. The catalysed reaction is 3,3'-diiodothyronamine + iodide + A + H(+) = 3,3',5-triiodothyronamine + AH2. It carries out the reaction 3-iodothyronamine + iodide + A + H(+) = 3,5-diiodothyronamine + AH2. The enzyme catalyses 3,3'-diiodo-L-thyronine sulfate + iodide + A + H(+) = 3,3',5'-triiodo-L-thyronine sulfate + AH2. It catalyses the reaction 3,3',5'-triiodo-L-thyronine sulfate + iodide + A + H(+) = L-thyroxine sulfate + AH2. The catalysed reaction is 3,3'-diiodo-L-thyronine sulfate + iodide + A + H(+) = 3,3',5-triiodo-L-thyronine sulfate + AH2. Plays a crucial role in the metabolism of thyroid hormones (TH) and has specific roles in TH activation and inactivation by deiodination. Catalyzes the deiodination of L-thyroxine (T4) to 3,5,3'-triiodothyronine (T3) via outer-ring deiodination (ORD) and of T4 to 3,3',5'-triiodothyronine (rT3) via inner-ring deiodination (IRD). Catalyzes the deiodiantion of rT3 to 3,3'-diiodothyronine (3,3'-T2) and 3',5'-diiodothyronine (3',5'-T2) to 3'-monoiodothyronine (3'-T1) via ORD. Catalyzes the deiodination of T3 to 3,3'-T2, 3,5-diiodothyronine (3,5-T2) to 3-monoiodothyronine (3-T1) and 3,3'-T2 to 3-T1 via IRD. Catalyzes the phenolic ring deiodinations of 3,3',5'-triiodothyronamine, 3',5'-diiodothyronamine and 3,3'-diiodothyronamine as well as tyrosyl ring deiodinations of 3,5,3'-triiodothyronamine and 3,5-diiodothyronamine. Catalyzes the deiodination of L-thyroxine sulfate and 3,3',5-triiodo-L-thyronine sulfate via IRD and of 3,3',5'-triiodo-L-thyronine sulfate via ORD. The sequence is that of Type I iodothyronine deiodinase (DIO1) from Oryctolagus cuniculus (Rabbit).